We begin with the raw amino-acid sequence, 201 residues long: Auxin-binding protein 1 (201 aa).

A signal peptide spans 1–38; it reads MAPDLSELAAAAAARGAYLAGVGVAVLLAASFLPVAES. A disulfide bond links C40 and C193. Residues H95, H97, and E101 each contribute to the Zn(2+) site. N133 carries an N-linked (GlcNAc...) asparagine glycan. H144 is a binding site for Zn(2+). The Prevents secretion from ER signature appears at 198 to 201; that stretch reads KDEL.

Homodimer. In terms of processing, glycosylated. In terms of tissue distribution, expressed in roots, coleoptiles, leaves, stems, tassels and ears.

The protein resides in the endoplasmic reticulum lumen. In terms of biological role, receptor for the plant hormone auxin. The chain is Auxin-binding protein 1 from Zea mays (Maize).